Consider the following 66-residue polypeptide: Ornithorhynchus venom defensin-like peptide A (66 aa).

The N-terminal stretch at 1–22 is a signal peptide; sequence MRLTYLLLLLVAVLFQAGSGSA. The propeptide occupies 23–24; that stretch reads EP. Cystine bridges form between Cys-33–Cys-63, Cys-40–Cys-56, and Cys-48–Cys-64.

As to expression, produced by the crural gland and detected in venom from the spur located on each male hind leg. Is the only OvDLP that is expressed in venom gland alone.

It localises to the secreted. Its function is as follows. Does not show antimicrobial, myotoxic, hemolytic and cell-promoting activities. The chain is Ornithorhynchus venom defensin-like peptide A from Ornithorhynchus anatinus (Duckbill platypus).